Reading from the N-terminus, the 394-residue chain is 1-deoxy-D-xylulose 5-phosphate reductoisomerase (394 aa).

Residues T12, G13, S14, I15, K39, Q40, and N126 each coordinate NADPH. Residue K127 participates in 1-deoxy-D-xylulose 5-phosphate binding. An NADPH-binding site is contributed by E128. D152 is a binding site for Mn(2+). 1-deoxy-D-xylulose 5-phosphate is bound by residues S153, E154, S183, and H206. E154 lines the Mn(2+) pocket. NADPH is bound at residue G212. Residues S219, N224, K225, and E228 each contribute to the 1-deoxy-D-xylulose 5-phosphate site. E228 contributes to the Mn(2+) binding site.

The protein belongs to the DXR family. It depends on Mg(2+) as a cofactor. Mn(2+) is required as a cofactor.

It carries out the reaction 2-C-methyl-D-erythritol 4-phosphate + NADP(+) = 1-deoxy-D-xylulose 5-phosphate + NADPH + H(+). It participates in isoprenoid biosynthesis; isopentenyl diphosphate biosynthesis via DXP pathway; isopentenyl diphosphate from 1-deoxy-D-xylulose 5-phosphate: step 1/6. Functionally, catalyzes the NADPH-dependent rearrangement and reduction of 1-deoxy-D-xylulose-5-phosphate (DXP) to 2-C-methyl-D-erythritol 4-phosphate (MEP). The polypeptide is 1-deoxy-D-xylulose 5-phosphate reductoisomerase (Neisseria meningitidis serogroup A / serotype 4A (strain DSM 15465 / Z2491)).